Here is a 185-residue protein sequence, read N- to C-terminus: MPKTVLSDMKTHMEKTVAVLKAEFQKVRTGRASTAILDSVKMDYYGNPTPISQIATLAIPEPRMITITPWEAKQISVIEKAIFNANIGLTPSNDGKSIRLSLPPLTEERRREIVKDLKKMAEDNRVALRNIRRDAIDRLKKLEKDKSITEDELKKYEKEVQDNTKSFEIKIDEAMTNKEKEVMEV.

Belongs to the RRF family.

Its subcellular location is the cytoplasm. Responsible for the release of ribosomes from messenger RNA at the termination of protein biosynthesis. May increase the efficiency of translation by recycling ribosomes from one round of translation to another. In Pelobacter propionicus (strain DSM 2379 / NBRC 103807 / OttBd1), this protein is Ribosome-recycling factor.